A 313-amino-acid chain; its full sequence is Peroxidase 57 (313 aa).

An N-terminal signal peptide occupies residues 1–22 (MMKGAKFSSLLVLFFIFPIAFA). Disulfide bonds link cysteine 33-cysteine 109, cysteine 66-cysteine 71, cysteine 115-cysteine 309, and cysteine 192-cysteine 224. Residue histidine 64 is the Proton acceptor of the active site. Positions 65, 68, 70, 72, and 74 each coordinate Ca(2+). Proline 155 serves as a coordination point for substrate. Histidine 185 is a binding site for heme b. Threonine 186 is a binding site for Ca(2+). Aspartate 233, serine 236, and aspartate 241 together coordinate Ca(2+).

The protein belongs to the peroxidase family. Classical plant (class III) peroxidase subfamily. Heme b is required as a cofactor. The cofactor is Ca(2+). As to expression, mainly expressed in roots.

The protein resides in the secreted. It catalyses the reaction 2 a phenolic donor + H2O2 = 2 a phenolic radical donor + 2 H2O. Its function is as follows. Removal of H(2)O(2), oxidation of toxic reductants, biosynthesis and degradation of lignin, suberization, auxin catabolism, response to environmental stresses such as wounding, pathogen attack and oxidative stress. These functions might be dependent on each isozyme/isoform in each plant tissue. The polypeptide is Peroxidase 57 (PER57) (Arabidopsis thaliana (Mouse-ear cress)).